The following is a 491-amino-acid chain: Probable glycine dehydrogenase (decarboxylating) subunit 2 (491 aa).

Residue Lys273 is modified to N6-(pyridoxal phosphate)lysine.

The protein belongs to the GcvP family. C-terminal subunit subfamily. As to quaternary structure, the glycine cleavage system is composed of four proteins: P, T, L and H. In this organism, the P 'protein' is a heterodimer of two subunits. Pyridoxal 5'-phosphate serves as cofactor.

It carries out the reaction N(6)-[(R)-lipoyl]-L-lysyl-[glycine-cleavage complex H protein] + glycine + H(+) = N(6)-[(R)-S(8)-aminomethyldihydrolipoyl]-L-lysyl-[glycine-cleavage complex H protein] + CO2. In terms of biological role, the glycine cleavage system catalyzes the degradation of glycine. The P protein binds the alpha-amino group of glycine through its pyridoxal phosphate cofactor; CO(2) is released and the remaining methylamine moiety is then transferred to the lipoamide cofactor of the H protein. This Bacillus anthracis (strain A0248) protein is Probable glycine dehydrogenase (decarboxylating) subunit 2.